The following is a 494-amino-acid chain: Ectonucleoside triphosphate diphosphohydrolase 8 (494 aa).

Over 1–8 (MRLSWKER) the chain is Cytoplasmic. A helical membrane pass occupies residues 9 to 29 (VFMVLLGVAAASGLTMLILIL). Over 30–465 (VKATNVLLPA…LTQWRAQSYS (436 aa)) the chain is Extracellular. Cysteines 78 and 102 form a disulfide. Residue Glu-168 is the Proton acceptor of the active site. Residues Cys-245 and Cys-291 are joined by a disulfide bond. 2 N-linked (GlcNAc...) asparagine glycosylation sites follow: Asn-299 and Asn-303. Cysteines 328 and 334 form a disulfide. N-linked (GlcNAc...) asparagine glycosylation is present at Asn-362. A disulfide bridge links Cys-380 with Cys-402. Residues 466-486 (IWIAGVVFAVLTLVAILGAAA) form a helical membrane-spanning segment. Residues 487–494 (VQLFWTQD) are Cytoplasmic-facing.

This sequence belongs to the GDA1/CD39 NTPase family. The cofactor is Ca(2+). Requires Mg(2+) as cofactor. In terms of processing, N-glycosylated. As to expression, present in liver, and at lower level in jejunum and kidney. Limited to the canalicular domain of hepatocytes (at protein level).

Its subcellular location is the cell membrane. The enzyme catalyses a ribonucleoside 5'-triphosphate + 2 H2O = a ribonucleoside 5'-phosphate + 2 phosphate + 2 H(+). Canalicular ectonucleoside NTPDase responsible for the main hepatic NTPDase activity. Ectonucleoside NTPDases catalyze the hydrolysis of gamma- and beta-phosphate residues of nucleotides, playing a central role in concentration of extracellular nucleotides. Has activity toward ATP, ADP, UTP and UDP, but not toward AMP. This Rattus norvegicus (Rat) protein is Ectonucleoside triphosphate diphosphohydrolase 8 (Entpd8).